Here is a 150-residue protein sequence, read N- to C-terminus: Arginine repressor (150 aa).

Belongs to the ArgR family.

It localises to the cytoplasm. The protein operates within amino-acid biosynthesis; L-arginine biosynthesis [regulation]. In terms of biological role, regulates arginine biosynthesis genes. In Halothermothrix orenii (strain H 168 / OCM 544 / DSM 9562), this protein is Arginine repressor.